The following is a 437-amino-acid chain: uncharacterized protein (437 aa).

A helical membrane pass occupies residues 47–67; sequence LLIILIGFILLSSISAIQIDA.

The protein resides in the membrane. This is an uncharacterized protein from Methanocaldococcus jannaschii (strain ATCC 43067 / DSM 2661 / JAL-1 / JCM 10045 / NBRC 100440) (Methanococcus jannaschii).